The primary structure comprises 496 residues: Deoxyribodipyrimidine photo-lyase (496 aa).

The region spanning 28–160 is the Photolyase/cryptochrome alpha/beta domain; that stretch reads GPVVYWMFRD…EVDAHNVVPM (133 aa). FAD contacts are provided by residues Tyr-256, 269 to 273, 307 to 315, and 415 to 417; these read LSGLS, ELIVRRELS, and DGR. Position 307 (Glu-307) interacts with DNA.

It belongs to the DNA photolyase class-2 family. FAD serves as cofactor. As to expression, highly expressed in flowers. Expressed in roots and stems.

It is found in the nucleus. The enzyme catalyses cyclobutadipyrimidine (in DNA) = 2 pyrimidine residues (in DNA).. Its function is as follows. Involved in repair of UV radiation-induced DNA damage. Catalyzes the light-dependent monomerization (300-600 nm) of cyclobutylpyrimidine dimers (CPDs), which are formed between adjacent bases on the same DNA strand upon exposure to ultraviolet radiation. Required for plant survival in the presence of UV-B light. Not involved in the repair of (6-4) photoproducts. This is Deoxyribodipyrimidine photo-lyase (PHR1) from Arabidopsis thaliana (Mouse-ear cress).